We begin with the raw amino-acid sequence, 467 residues long: Neutral protease 2 homolog NFIA_031120 (467 aa).

A signal peptide spans 1-19 (MKITALASAILAVVHGALA). The propeptide occupies 20 to 172 (LPARAPALDI…PASIKPLDRR (153 aa)). 2 disulfides stabilise this stretch: Cys-179–Cys-251 and Cys-258–Cys-276. His-300 serves as a coordination point for Zn(2+). The active site involves Glu-301. Residues His-304 and Asp-315 each contribute to the Zn(2+) site. Residues 359–451 (WDGNSQPGQT…TMWDGSSEPG (93 aa)) show a composition bias toward polar residues. Positions 359–467 (WDGNSQPGQT…HTTWGNFYQA (109 aa)) are disordered.

It belongs to the peptidase M35 family. It depends on Zn(2+) as a cofactor.

The protein resides in the secreted. It carries out the reaction Preferential cleavage of bonds with hydrophobic residues in P1'. Also 3-Asn-|-Gln-4 and 8-Gly-|-Ser-9 bonds in insulin B chain.. Its function is as follows. Secreted metalloproteinase that allows assimilation of proteinaceous substrates. Shows high activities on basic nuclear substrates such as histone and protamine. The chain is Neutral protease 2 homolog NFIA_031120 from Neosartorya fischeri (strain ATCC 1020 / DSM 3700 / CBS 544.65 / FGSC A1164 / JCM 1740 / NRRL 181 / WB 181) (Aspergillus fischerianus).